Reading from the N-terminus, the 283-residue chain is ESX-1 secretion-associated protein EspG1 (283 aa).

This sequence belongs to the EspG family. Interacts specifically with ESX-1-dependent PE/PPE proteins. Interacts with PPE68.

It localises to the cytoplasm. Specific chaperone for cognate PE/PPE proteins. Plays an important role in preventing aggregation of PE/PPE dimers. The protein is ESX-1 secretion-associated protein EspG1 of Mycobacterium tuberculosis (strain ATCC 25618 / H37Rv).